The primary structure comprises 453 residues: Plasmepsin II (453 aa).

Residues 1–37 (MDITVREHDFKHGFIKSNSTFDGLNIDNSKNKKKIQK) lie on the Cytoplasmic side of the membrane. The propeptide occupies 1–124 (MDITVREHDF…SGLTKTNYLG (124 aa)). Residues 38–58 (GFQILYVLLFCSVMCGLFYYV) traverse the membrane as a helical; Signal-anchor for type II membrane protein segment. The Lumenal portion of the chain corresponds to 59–453 (YENVWLQRDN…VGIALAKKNL (395 aa)). In terms of domain architecture, Peptidase A1 spans 140-447 (FYGDAEVGDN…DYDNQSVGIA (308 aa)). Residue Asp158 is part of the active site. Cys171 and Cys176 are oxidised to a cystine. Asp338 is a catalytic residue. Cys373 and Cys409 form a disulfide bridge.

The protein belongs to the peptidase A1 family. As to quaternary structure, component of the hemozoin formation complex (HFC) composed of falcipains FP2A and/or FP2B, plasmepsins PMII, PMIII/HAP and PMIV, heme detoxifying protein HDP and falcilysin FLN. The HFC complex is involved in hemoglobin degradation and detoxification of heme in the food vacuole during the asexual blood stage. Not N-glycosylated. In terms of processing, proteolytically cleaved into the soluble active mature form in the digestive vacuole by cysteine protease falcipains; the process begins at the early ring stage. Proteolysis requires an acidic environment. In absence of falcipains, autoprocessing may serve as an alternate activation system.

It is found in the membrane. The protein localises to the vacuole lumen. It localises to the vacuole membrane. The enzyme catalyses Hydrolysis of the bonds linking certain hydrophobic residues in hemoglobin or globin. Also cleaves small molecules substrates such as Ala-Leu-Glu-Arg-Thr-Phe-|-Phe(NO2)-Ser-Phe-Pro-Thr.. Its activity is regulated as follows. Inhibited by pepstatin A. Inhibited by KNI derived compounds (KNI-10742, 10743, 10395, 10333, and 10343). Functionally, during the asexual blood stage, participates in initial cleavage of native host hemoglobin (Hb) resulting in Hb denaturation. May cleave preferentially denatured hemoglobin that has been cleaved by PMI. Digestion of host Hb is an essential step which provides the parasite with amino acids for protein synthesis, and regulates osmolarity. This Plasmodium falciparum (isolate 3D7) protein is Plasmepsin II.